Reading from the N-terminus, the 284-residue chain is ATP phosphoribosyltransferase (284 aa).

Belongs to the ATP phosphoribosyltransferase family. Long subfamily. Requires Mg(2+) as cofactor.

The protein localises to the cytoplasm. The enzyme catalyses 1-(5-phospho-beta-D-ribosyl)-ATP + diphosphate = 5-phospho-alpha-D-ribose 1-diphosphate + ATP. It functions in the pathway amino-acid biosynthesis; L-histidine biosynthesis; L-histidine from 5-phospho-alpha-D-ribose 1-diphosphate: step 1/9. With respect to regulation, feedback inhibited by histidine. Its function is as follows. Catalyzes the condensation of ATP and 5-phosphoribose 1-diphosphate to form N'-(5'-phosphoribosyl)-ATP (PR-ATP). Has a crucial role in the pathway because the rate of histidine biosynthesis seems to be controlled primarily by regulation of HisG enzymatic activity. The chain is ATP phosphoribosyltransferase from Pseudarthrobacter chlorophenolicus (strain ATCC 700700 / DSM 12829 / CIP 107037 / JCM 12360 / KCTC 9906 / NCIMB 13794 / A6) (Arthrobacter chlorophenolicus).